The sequence spans 229 residues: Peptidase E (229 aa).

Active-site charge relay system residues include Ser120, Asp135, and His157.

Belongs to the peptidase S51 family.

The protein localises to the cytoplasm. It carries out the reaction Dipeptidase E catalyzes the hydrolysis of dipeptides Asp-|-Xaa. It does not act on peptides with N-terminal Glu, Asn or Gln, nor does it cleave isoaspartyl peptides.. Hydrolyzes dipeptides containing N-terminal aspartate residues. May play a role in allowing the cell to use peptide aspartate to spare carbon otherwise required for the synthesis of the aspartate family of amino acids. This chain is Peptidase E, found in Shigella sonnei (strain Ss046).